The primary structure comprises 341 residues: Putative ankyrin repeat protein FPV031 (341 aa).

5 ANK repeats span residues 23–55, 58–87, 92–124, 125–158, and 163–195; these read DRNS…FQET, DNLT…IINQ, CGNT…ITNN, DGFT…IRDN, and TGLT…YSTC.

The polypeptide is Putative ankyrin repeat protein FPV031 (ANK3) (Fowlpox virus (strain NVSL) (FPV)).